The sequence spans 589 residues: Heterogeneous nuclear ribonucleoprotein L (589 aa).

Positions 1–16 are enriched in basic residues; it reads MSRRLLPRAEKRRRRL. The interval 1 to 100 is disordered; it reads MSRRLLPRAE…NYDDPHKTPA (100 aa). Positions 17–27 are enriched in basic and acidic residues; that stretch reads EQRQQPDEQRR. A compositionally biased stretch (gly residues) spans 38–54; the sequence is AGGGGGGGRYYGGGSEG. Residue Ser-52 is modified to Phosphoserine. Residues Lys-59 and Lys-62 each participate in a glycyl lysine isopeptide (Lys-Gly) (interchain with G-Cter in SUMO2) cross-link. Gly residues predominate over residues 69-90; that stretch reads QHGGGGGGGGGAGAAGGGGGGE. Phosphoserine is present on Ser-101. Residues 102-176 enclose the RRM 1 domain; the sequence is PVVHIRGLID…HPAFVNYSTS (75 aa). Lys-136 participates in a covalent cross-link: Glycyl lysine isopeptide (Lys-Gly) (interchain with G-Cter in SUMO2). Residue Ser-185 is modified to Phosphoserine. The 78-residue stretch at 193 to 270 folds into the RRM 2 domain; that stretch reads SVLLFTILNP…CTLKIEYAKP (78 aa). Lys-269 is subject to N6-acetyllysine. Positions 284-301 are enriched in polar residues; sequence DYTNPNLSGQGDPGSNPN. Residues 284–378 are disordered; sequence DYTNPNLSGQ…PPPPPEYGPH (95 aa). Residues Ser-291 and Ser-298 each carry the phosphoserine modification. Lys-302 is covalently cross-linked (Glycyl lysine isopeptide (Lys-Gly) (interchain with G-Cter in SUMO2)). Asymmetric dimethylarginine occurs at positions 354 and 358. Over residues 364 to 375 the composition is skewed to pro residues; it reads GHPPPPPPPPEY. Ser-381 is subject to Phosphoserine. RRM domains lie at 382 to 478 and 495 to 583; these read PVLM…KDFS and RIQH…LCFS. A Phosphoserine; by CaMK4 modification is found at Ser-544. A Glycyl lysine isopeptide (Lys-Gly) (interchain with G-Cter in SUMO2) cross-link involves residue Lys-568.

In terms of assembly, identified in a IGF2BP1-dependent mRNP granule complex containing untranslated mRNAs. Interacts with HNRNPLL. Interacts with APEX1; the interaction is DNA-dependent. Component of a complex with SETD2. Interacts with ELAVL1. Part of a transcription inhibitory ribonucleoprotein complex composed at least of the circular RNA circZNF827, ZNF827 and HNRNPK. Interacts with CHD8 in an RNA-dependent manner. In terms of processing, several isoelectric forms of the L protein are probably the results of post-translational modifications. Phosphorylation at Ser-544 by CaMK4 enhances interaction with a CaMK4-responsive RNA element (CaRRE1), and prevents inclusion of the stress axis-regulated exon (STREX) of the KCNMA1 potassium channel transcripts upon membrane depolarization.

It is found in the nucleus. It localises to the nucleoplasm. Its subcellular location is the cytoplasm. In terms of biological role, splicing factor binding to exonic or intronic sites and acting as either an activator or repressor of exon inclusion. Exhibits a binding preference for CA-rich elements. Component of the heterogeneous nuclear ribonucleoprotein (hnRNP) complexes and associated with most nascent transcripts. Associates, together with APEX1, to the negative calcium responsive element (nCaRE) B2 of the APEX2 promoter. As part of a ribonucleoprotein complex composed at least of ZNF827, HNRNPK and the circular RNA circZNF827 that nucleates the complex on chromatin, may negatively regulate the transcription of genes involved in neuronal differentiation. Regulates alternative splicing of a core group of genes involved in neuronal differentiation, likely by mediating H3K36me3-coupled transcription elongation and co-transcriptional RNA processing via interaction with CHD8. This chain is Heterogeneous nuclear ribonucleoprotein L (HNRNPL), found in Homo sapiens (Human).